The sequence spans 605 residues: Alpha-amylase (605 aa).

Residues 1 to 33 form the signal peptide; it reads MGVRRSLAALLAALLGCATSLVALTVAASPAHA. 2 residues coordinate Ca(2+): asparagine 130 and aspartate 189. The Nucleophile role is filled by aspartate 219. Position 223 (histidine 223) interacts with Ca(2+). Glutamate 253 serves as the catalytic Proton donor. The CBM20 domain maps to 500-605; that stretch reads GDDCTTVTAR…CSQNFYDSWR (106 aa).

This sequence belongs to the glycosyl hydrolase 13 family. Monomer. Ca(2+) serves as cofactor.

It carries out the reaction Endohydrolysis of (1-&gt;4)-alpha-D-glucosidic linkages in polysaccharides containing three or more (1-&gt;4)-alpha-linked D-glucose units.. This chain is Alpha-amylase (tam), found in Thermomonospora curvata.